A 277-amino-acid polypeptide reads, in one-letter code: Large ribosomal subunit protein uL2 (277 aa).

Positions 215–263 (LGRKPHQRGSAMNPVDHPHGGGEGRTGAGRVPVSPWGQPAKGLKTRKKR) are disordered.

Belongs to the universal ribosomal protein uL2 family. As to quaternary structure, part of the 50S ribosomal subunit. Forms a bridge to the 30S subunit in the 70S ribosome.

Functionally, one of the primary rRNA binding proteins. Required for association of the 30S and 50S subunits to form the 70S ribosome, for tRNA binding and peptide bond formation. It has been suggested to have peptidyltransferase activity; this is somewhat controversial. Makes several contacts with the 16S rRNA in the 70S ribosome. The chain is Large ribosomal subunit protein uL2 from Deinococcus geothermalis (strain DSM 11300 / CIP 105573 / AG-3a).